The chain runs to 392 residues: Zinc transporter zipt-7.1 (392 aa).

Residue N63 is glycosylated (N-linked (GlcNAc...) asparagine). 2 helical membrane passes run 82–102 (VFSL…LFFI) and 114–134 (ILLA…IIPH). The interval 139 to 162 (HSHGAHDHDHAHSHDHAHNDHSHD) is disordered. Basic and acidic residues predominate over residues 142–162 (GAHDHDHAHSHDHAHNDHSHD). The chain crosses the membrane as a helical span at residues 170–190 (GIYVIAGILVFMMVEQLVRII). Residue N248 is glycosylated (N-linked (GlcNAc...) asparagine). A run of 3 helical transmembrane segments spans residues 255-275 (IGAS…TVLL), 304-324 (VTAL…NPVL), and 331-351 (GAIM…SVIP). An N-linked (GlcNAc...) asparagine glycan is attached at N361. The chain crosses the membrane as a helical span at residues 371–391 (SLVHLIAICMGVGMMYIVSLV).

The protein belongs to the ZIP transporter (TC 2.A.5) family. KE4/Catsup subfamily.

It is found in the membrane. Its function is as follows. Zinc transporter which regulates intracellular zinc levels. Required for spermatogenesis in both hermaphrodites and males where it resides in an inactive form in immature sperm, spermatids, but is likely activated in response to reduced spe-4 and spe-6 function. Upon activation, mediates the release of zinc from internal stores in spermatids into the cytoplasm. The resulting increase in cytoplasmic zinc levels promotes spermatid activation and subsequent differentiation into mature motile sperm that are capable of fertilization. The polypeptide is Zinc transporter zipt-7.1 (Caenorhabditis briggsae).